A 3619-amino-acid polypeptide reads, in one-letter code: BEACH domain-containing protein lvsA (3619 aa).

Disordered stretches follow at residues 1–117, 648–709, 1101–1129, 1367–1390, 1636–1658, 1893–1924, and 1964–1999; these read MFRR…NNNN, KIDD…EKEA, NNNNNNSSNNSNNSNNSNNNNNNNNNNDQ, SPNLTGLQNNNNNNNNSGGSNSKK, IPTPSSSSSSSSTSSTSSRRKSI, SSISSNISSSSSSSTLVNSSNSNNNNNTPTSG, and QQAALKKKNRMSIQSSPFQSKNLGTGGDDSVTNTPN. The span at 17–30 shows a compositional bias: pro residues; sequence PQVPHSPGHPPHQP. Low complexity-rich tracts occupy residues 31-59, 68-87, 97-117, 656-689, 1101-1127, 1375-1387, 1640-1652, and 1893-1923; these read PQQQQQQQQQQQQQQQQQQQQQQQQQQPQ, SVSSPIGSTTSSNSTSSFSS, EESSSINSNNNNNNNKNNNNN, NNNNNNNNNNNNNNNNNNNDNDNNNNNDNNNEEN, NNNNNNSSNNSNNSNNSNNNNNNNNNN, NNNNNNNNSGGSN, SSSSSSSSTSSTS, and SSISSNISSSSSSSTLVNSSNSNNNNNTPTS. The WD 1 repeat unit spans residues 94–133; it reads SATEESSSINSNNNNNNNKNNNNNNNSNIIESNINVWTIM. The segment covering 1974-1986 has biased composition (polar residues); it reads MSIQSSPFQSKNL. Residues 2234–2258 adopt a coiled-coil conformation; sequence VKILEKLEADRVGLQKTVQSLYKSL. One copy of the WD 2 repeat lies at 2294–2335; sequence LDSDFMNAFCYPLYKLVISDQHEHVDNSIKLWRLLLSLKTSS. Disordered regions lie at residues 2403-2457 and 2596-2785; these read KKQH…ITKK and NTSS…SEDE. A compositionally biased stretch (basic and acidic residues) spans 2440–2452; sequence DRKDQSHQEEKSK. Low complexity predominate over residues 2596-2662; it reads NTSSITNNNN…TTTPQQSSSQ (67 aa). Composition is skewed to polar residues over residues 2663–2687 and 2694–2725; these read IKVSSPELSSNEITPPTSPVQSSSE and KLQSSTVEGQLSRNPSSSELFNDNSSTISEEN. 2 stretches are compositionally biased toward low complexity: residues 2726–2735 and 2742–2764; these read SSLTSASTTL and TQTTTTTTTSTPTTQSSVATTTT. The region spanning 2807-2932 is the BEACH-type PH domain; it reads KDPRLNGIMY…TRDEVYHTLV (126 aa). The interval 2940 to 2971 is disordered; sequence TIGGDAQGITGGQTGNDDNDDHHGGGGGRGVR. Gly residues predominate over residues 2944 to 2953; sequence DAQGITGGQT. The segment covering 2959-2971 has biased composition (basic and acidic residues); that stretch reads DDHHGGGGGRGVR. Residues 2972–3270 form the BEACH domain; sequence DRFTSIWRKS…QLFDKPHPKR (299 aa). 5 WD repeats span residues 3347–3386, 3389–3428, 3431–3471, 3474–3518, and 3563–3602; these read HHDGPLTCLTATEDGRICVSGGSDSLICVYNLKRFSLAKR, GHTGSITCVSASRPYSIIVSGSDDRTCIIWDLNRLCYVRS, AHEG…NYKT, IAND…LPDN, and SHSTAITSIFLTNDQQKFYTGDITGRVCMWSDNEASQVKQ. A disordered region spans residues 3516–3539; it reads PDNNNSNNNNNNNNNNNNNATQIP. A compositionally biased stretch (low complexity) spans 3518–3534; that stretch reads NNNSNNNNNNNNNNNNN.

The protein resides in the contractile vacuole membrane. In terms of biological role, involved in myosin-independent cytokinesis and early steps of phagocytosis. Also involved in contractile vacuole-mediated osmoregulation. This chain is BEACH domain-containing protein lvsA (lvsA), found in Dictyostelium discoideum (Social amoeba).